The primary structure comprises 587 residues: Urease subunit alpha (587 aa).

The Urease domain maps to 134-572; it reads GGIDTHVHFI…LPLAQRYLYT (439 aa). Ni(2+)-binding residues include H139, H141, and K222. An N6-carboxylysine modification is found at K222. Residue H224 coordinates substrate. Positions 251 and 277 each coordinate Ni(2+). H325 functions as the Proton donor in the catalytic mechanism. D365 is a binding site for Ni(2+).

Belongs to the metallo-dependent hydrolases superfamily. Urease alpha subunit family. In terms of assembly, heterotrimer of UreA (gamma), UreB (beta) and UreC (alpha) subunits. Three heterotrimers associate to form the active enzyme. Ni cation is required as a cofactor. In terms of processing, carboxylation allows a single lysine to coordinate two nickel ions.

It localises to the cytoplasm. The enzyme catalyses urea + 2 H2O + H(+) = hydrogencarbonate + 2 NH4(+). It participates in nitrogen metabolism; urea degradation; CO(2) and NH(3) from urea (urease route): step 1/1. The protein is Urease subunit alpha of Clostridium perfringens.